A 93-amino-acid chain; its full sequence is Small ribosomal subunit protein uS17 (93 aa).

It belongs to the universal ribosomal protein uS17 family. Part of the 30S ribosomal subunit.

In terms of biological role, one of the primary rRNA binding proteins, it binds specifically to the 5'-end of 16S ribosomal RNA. The sequence is that of Small ribosomal subunit protein uS17 from Rhodococcus jostii (strain RHA1).